A 130-amino-acid chain; its full sequence is Holo-[acyl-carrier-protein] synthase (130 aa).

Asp-8 and Glu-62 together coordinate Mg(2+).

It belongs to the P-Pant transferase superfamily. AcpS family. Mg(2+) is required as a cofactor.

The protein resides in the cytoplasm. It carries out the reaction apo-[ACP] + CoA = holo-[ACP] + adenosine 3',5'-bisphosphate + H(+). In terms of biological role, transfers the 4'-phosphopantetheine moiety from coenzyme A to a Ser of acyl-carrier-protein. This is Holo-[acyl-carrier-protein] synthase from Herminiimonas arsenicoxydans.